We begin with the raw amino-acid sequence, 464 residues long: Glutamate decarboxylase (464 aa).

Residue K274 is modified to N6-(pyridoxal phosphate)lysine.

The protein belongs to the group II decarboxylase family. Pyridoxal 5'-phosphate is required as a cofactor.

The enzyme catalyses L-glutamate + H(+) = 4-aminobutanoate + CO2. In terms of biological role, catalyzes the pyridoxal-dependent decarboxylation of glutamate to produce 4-aminobutanoate. Has weak activity with aspartate, but cannot complement an E.coli panD deletion mutant. This is Glutamate decarboxylase from Aliivibrio fischeri (strain ATCC 700601 / ES114) (Vibrio fischeri).